The chain runs to 419 residues: UDP-N-acetylglucosamine 1-carboxyvinyltransferase (419 aa).

Residue K22–N23 participates in phosphoenolpyruvate binding. R91 serves as a coordination point for UDP-N-acetyl-alpha-D-glucosamine. The active-site Proton donor is C115. A 2-(S-cysteinyl)pyruvic acid O-phosphothioketal modification is found at C115. Residues R120–L124, K160–V163, D305, and I327 contribute to the UDP-N-acetyl-alpha-D-glucosamine site.

Belongs to the EPSP synthase family. MurA subfamily.

It is found in the cytoplasm. It catalyses the reaction phosphoenolpyruvate + UDP-N-acetyl-alpha-D-glucosamine = UDP-N-acetyl-3-O-(1-carboxyvinyl)-alpha-D-glucosamine + phosphate. It participates in cell wall biogenesis; peptidoglycan biosynthesis. Functionally, cell wall formation. Adds enolpyruvyl to UDP-N-acetylglucosamine. The protein is UDP-N-acetylglucosamine 1-carboxyvinyltransferase of Cronobacter sakazakii (strain ATCC BAA-894) (Enterobacter sakazakii).